Reading from the N-terminus, the 2871-residue chain is Fibrillin-1 (2871 aa).

Positions 1-24 (MRRGRLLEVALGFTVLLASYTSHR) are cleaved as a signal peptide. Positions 25–44 (AEANLEAGNGKETRASRAKR) are excised as a propeptide. Residues 29–39 (LEAGNGKETRA) are compositionally biased toward basic and acidic residues. Residues 29 to 49 (LEAGNGKETRASRAKRRGGGG) are disordered. The interval 45–81 (RGGGGHDALKGPNVCGSRYNAYCCPGWKTLPGGNQCI) is fibrillin unique N-terminal (FUN) domain. The interval 45-450 (RGGGGHDALK…PPRVLPVNVT (406 aa)) is N-terminal domain. Intrachain disulfides connect Cys-59–Cys-68, Cys-67–Cys-80, Cys-85–Cys-94, Cys-89–Cys-100, Cys-102–Cys-111, Cys-119–Cys-129, Cys-123–Cys-134, Cys-136–Cys-145, Cys-150–Cys-160, Cys-154–Cys-166, and Cys-168–Cys-177. EGF-like domains follow at residues 81–112 (IVPICRHSCGDGFCSRPNMCTCPSGQIAPSCG), 115–146 (SIQHCNIRCMNGGSCSDDHCLCQKGYIGTHCG), and 147–178 (QPVCESGCLNGGRCVAPNRCACTYGFTGPQCE). The tract at residues 119–329 (CNIRCMNGGS…YTSPDGTRCI (211 aa)) is interaction with MFAP4. Residues 184 to 236 (GPCFTVVSNQMCQGQLSGIVCTKTLCCATVGRAWGHPCEMCPAQPHPCRRGFI) form the TB 1 domain. The segment at 195–221 (CQGQLSGIVCTKTLCCATVGRAWGHPC) is hybrid domain 1. An EGF-like 4; calcium-binding domain is found at 246 to 287 (DVDECQAIPGLCQGGNCINTVGSFECKCPAGHKFNEVSQKCE). Intrachain disulfides connect Cys-250-Cys-262, Cys-257-Cys-271, Cys-273-Cys-286, Cys-292-Cys-304, Cys-299-Cys-313, and Cys-315-Cys-328. O-linked (Glc) serine glycosylation occurs at Ser-268. The 42-residue stretch at 288–329 (DIDECSTIPGICDGGECTNTVSSYFCKCPPGFYTSPDGTRCI) folds into the EGF-like 5; calcium-binding domain. The region spanning 334–389 (GYCYTALTNGRCSNQLPQSITKMQCCCDVGRCWSPGVTVTPEMCPIRATEDFNKLC) is the TB 2 domain. Asn-448 carries an N-linked (GlcNAc...) asparagine glycan. An EGF-like 6 domain is found at 449 to 489 (VTDYCQLFRYLCHNGRCIPTPGSYRCECNKGFQLDLRGECI). Intrachain disulfides connect Cys-453/Cys-465, Cys-460/Cys-474, Cys-476/Cys-488, Cys-494/Cys-504, Cys-499/Cys-513, Cys-515/Cys-528, Cys-534/Cys-546, Cys-541/Cys-555, Cys-557/Cys-570, Cys-576/Cys-587, Cys-582/Cys-596, Cys-598/Cys-611, Cys-617/Cys-628, Cys-623/Cys-637, and Cys-639/Cys-652. Residue Ser-471 is glycosylated (O-linked (Glc) serine). The EGF-like 7; calcium-binding domain occupies 490–529 (DVDECEKNPCAGGECINNQGSYTCQCRPGYQSTLTRTECR). Ser-510 carries O-linked (Glc) serine glycosylation. One can recognise an EGF-like 8; calcium-binding domain in the interval 530–571 (DIDECLQNGRICNNGRCINTDGSFHCVCNAGFHVTRDGKNCE). Positions 572-612 (DMDECSIRNMCLNGMCINEDGSFKCICKPGFQLASDGRYCK) constitute an EGF-like 9; calcium-binding domain. The EGF-like 10; calcium-binding domain maps to 613–653 (DINECETSGICMNGRCVNTDGSYRCECFPGLAVGLDGRVCV). Residues 659 to 711 (STCYGGYKRGQCVKPLFGAVTKSECCCASTEYAFGEPCQPCPSQNSAEYQALC) enclose the TB 3 domain. Residues 723-764 (DINECALDPDICPNGICENLRGTYKCICNSGYEVDSTGKNCV) enclose the EGF-like 11; calcium-binding domain. Intrachain disulfides connect Cys-727-Cys-739, Cys-734-Cys-748, Cys-750-Cys-763, Cys-769-Cys-781, Cys-776-Cys-790, Cys-792-Cys-805, Cys-811-Cys-821, Cys-816-Cys-830, Cys-832-Cys-845, Cys-853-Cys-875, Cys-862-Cys-887, Cys-876-Cys-890, Cys-896-Cys-908, Cys-914-Cys-926, Cys-921-Cys-935, and Cys-937-Cys-950. The EGF-like 12; calcium-binding domain occupies 765–806 (DINECVLNSLLCDNGQCRNTPGSFVCTCPKGFIYKPDLKTCE). The EGF-like 13; calcium-binding domain maps to 807–846 (DIDECESSPCINGVCKNSPGSFICECSSESTLDPTKTICI). The TB 4 domain maps to 851-902 (GTCWQTIIDGRCEININGATLKSQCCSSLGAAWGSPCTPCQVDPICGKGYSR). The tract at residues 862-887 (CEININGATLKSQCCSSLGAAWGSPC) is hybrid domain 2. Residues 910–951 (DIDECEVFPGVCKNGLCVNSKGSFKCQCPNGMTLDATGRICL) enclose the EGF-like 14; calcium-binding domain. Residues 956–1008 (ETCFLRYEDEECTLPVVGRHRMDACCCSVGAAWGTEECEECPPRNTPEYEELC) form the TB 5 domain. In terms of domain architecture, EGF-like 15; calcium-binding spans 1028–1069 (DINECKMIPNLCTHGKCRNTIGSFKCRCDSGFALDSEERNCI). 43 disulfides stabilise this stretch: Cys-1032–Cys-1044, Cys-1039–Cys-1053, Cys-1055–Cys-1068, Cys-1074–Cys-1086, Cys-1081–Cys-1095, Cys-1097–Cys-1111, Cys-1117–Cys-1129, Cys-1124–Cys-1138, Cys-1140–Cys-1153, Cys-1159–Cys-1171, Cys-1201–Cys-1212, Cys-1208–Cys-1221, Cys-1223–Cys-1236, Cys-1242–Cys-1254, Cys-1249–Cys-1263, Cys-1265–Cys-1278, Cys-1284–Cys-1296, Cys-1291–Cys-1305, Cys-1307–Cys-1320, Cys-1326–Cys-1339, Cys-1333–Cys-1348, Cys-1350–Cys-1361, Cys-1367–Cys-1380, Cys-1374–Cys-1389, Cys-1391–Cys-1402, Cys-1408–Cys-1420, Cys-1415–Cys-1429, Cys-1450–Cys-1461, Cys-1456–Cys-1470, Cys-1472–Cys-1485, Cys-1491–Cys-1502, Cys-1497–Cys-1511, Cys-1513–Cys-1526, Cys-1534–Cys-1562, Cys-1549–Cys-1574, Cys-1563–Cys-1577, Cys-1564–Cys-1589, Cys-1610–Cys-1622, Cys-1617–Cys-1631, Cys-1633–Cys-1646, Cys-1652–Cys-1663, Cys-1658–Cys-1672, and Cys-1674–Cys-1687. One can recognise an EGF-like 16; calcium-binding domain in the interval 1070–1112 (DIDECRISPDLCGRGQCVNTPGDFECKCDEGYESGFMMMKNCM). The 42-residue stretch at 1113–1154 (DIDECQRDPLLCRGGVCLNTEGSYRCECPSGHQMSPNISACI) folds into the EGF-like 17; calcium-binding domain. Residue Ser-1135 is glycosylated (O-linked (Glc) serine). Residue Asn-1149 is glycosylated (N-linked (GlcNAc...) asparagine). Residues 1155–1196 (DINECELSAHLCPHGRCVNLIGKYQRARNPGYHSTPDRLFCV) form the EGF-like 18; calcium-binding domain. One can recognise an EGF-like 19; calcium-binding domain in the interval 1197–1237 (DIDECSIMNGGCETFCTNSEGSYECSCQPGFALMPDQRSCT). Ser-1218 carries O-linked (Glc) serine glycosylation. Residues 1238–1279 (DIDECEDNPNICDGGQCTNIPGEYRCLCYDGFMASEDMKTCV) form the EGF-like 20; calcium-binding domain. In terms of domain architecture, EGF-like 21; calcium-binding spans 1280 to 1321 (DVNECDLNPNICLSGTCENTKGSFICHCDMGYSGKKGKTGCT). O-linked (Glc) serine glycosylation occurs at Ser-1302. Residues 1322-1362 (DINECEIGAHNCDRHAVCTNTAGSFNCSCSPGWIGDGIKCT) form the EGF-like 22; calcium-binding domain. An O-linked (Glc) serine glycan is attached at Ser-1345. Asn-1347 is a glycosylation site (N-linked (GlcNAc...) asparagine). The region spanning 1363–1403 (DLDECSNGTHMCSQHADCKNTMGSYRCLCKEGYTGDGFTCA) is the EGF-like 23; calcium-binding domain. A glycan (N-linked (GlcNAc...) asparagine) is linked at Asn-1369. An O-linked (Glc) serine glycan is attached at Ser-1386. The 42-residue stretch at 1404–1445 (DLDECSENVKLCGNVQCLYAPGGYHCEYDMGFVPSADRKSCV) folds into the EGF-like 24; calcium-binding domain. The 41-residue stretch at 1446–1486 (DSDECSLPNICVFGTCHNLPGLFRCECEIGYELDRSGGNCT) folds into the EGF-like 25; calcium-binding domain. An N-linked (GlcNAc...) asparagine glycan is attached at Asn-1484. An EGF-like 26; calcium-binding domain is found at 1487 to 1527 (DVNECLEPPTCISGNCVNTPGSYTCVCPPDFELNPTRVGCV). Ser-1508 carries an O-linked (Glc) serine glycan. A C-terminal domain region spans residues 1528–2731 (DTRSGNCYLD…GYPKRGRKRR (1204 aa)). A TB 6 domain is found at 1532–1589 (GNCYLDVRPRGDNGDTACSNEIGVGVSKASCCCSLGKAWGTPCEQCPPVNTSEYKILC). The Cell attachment site signature appears at 1541-1543 (RGD). N-linked (GlcNAc...) asparagine glycosylation occurs at Asn-1581. One can recognise an EGF-like 27; calcium-binding domain in the interval 1606-1647 (DIDECQELPGLCQGGKCINTFGSFQCRCPTGYYLNEDTRVCD). Ser-1628 carries an O-linked (Glc) serine glycan. The EGF-like 28; calcium-binding domain maps to 1648–1688 (DVNECETPGICGPGTCYNTVGNYTCICPPDYMQVNGGNNCM). The N-linked (GlcNAc...) asparagine glycan is linked to Asn-1669. The TB 7 domain maps to 1693–1748 (SLCYRNYYADNQTCDGELLFNMTKKMCCCSYNIGRAWNKPCEQCPIPSTDEFATLC). 2 N-linked (GlcNAc...) asparagine glycosylation sites follow: Asn-1703 and Asn-1713. Positions 1766–1807 (DIDECREIPGVCENGVCINMVGSFRCECPVGFFYNDKLLVCE) constitute an EGF-like 29; calcium-binding domain. 40 cysteine pairs are disulfide-bonded: Cys-1770-Cys-1782, Cys-1777-Cys-1791, Cys-1793-Cys-1806, Cys-1812-Cys-1824, Cys-1818-Cys-1833, Cys-1835-Cys-1847, Cys-1853-Cys-1865, Cys-1860-Cys-1874, Cys-1876-Cys-1889, Cys-1895-Cys-1905, Cys-1900-Cys-1914, Cys-1916-Cys-1928, Cys-1934-Cys-1947, Cys-1942-Cys-1956, Cys-1958-Cys-1971, Cys-1977-Cys-1989, Cys-1984-Cys-1998, Cys-2000-Cys-2011, Cys-2017-Cys-2029, Cys-2024-Cys-2038, Cys-2040-Cys-2053, Cys-2061-Cys-2083, Cys-2070-Cys-2096, Cys-2084-Cys-2099, Cys-2085-Cys-2111, Cys-2131-Cys-2142, Cys-2137-Cys-2151, Cys-2153-Cys-2164, Cys-2170-Cys-2181, Cys-2176-Cys-2190, Cys-2192-Cys-2204, Cys-2210-Cys-2221, Cys-2217-Cys-2230, Cys-2232-Cys-2245, Cys-2251-Cys-2265, Cys-2258-Cys-2274, Cys-2276-Cys-2289, Cys-2295-Cys-2307, Cys-2302-Cys-2316, and Cys-2318-Cys-2331. An EGF-like 30; calcium-binding domain is found at 1808 to 1848 (DIDECQNGPVCQRNAECINTAGSYRCDCKPGYRFTSTGQCN). An O-linked (Glc) serine glycan is attached at Ser-1830. The region spanning 1849–1890 (DRNECQEIPNICSHGQCIDTVGSFYCLCHTGFKTNADQTMCL) is the EGF-like 31; calcium-binding domain. O-linked (Glc) serine glycosylation is present at Ser-1871. Positions 1891–1929 (DINECERDACGNGTCRNTIGSFNCRCNHGFILSHNNDCI) constitute an EGF-like 32; calcium-binding domain. Asn-1902 is a glycosylation site (N-linked (GlcNAc...) asparagine). Ser-1911 is a glycosylation site (O-linked (Glc) serine). The region spanning 1930 to 1972 (DVDECATGNGNLCRNGQCINTVGSFQCQCNEGYEVAPDGRTCV) is the EGF-like 33; calcium-binding domain. The O-linked (Glc) serine glycan is linked to Ser-1953. Positions 1973-2012 (DINECLLEPGKCAPGTCQNLDGSYRCICPPGYSLQNDKCE) constitute an EGF-like 34; calcium-binding domain. The EGF-like 35; calcium-binding domain maps to 2013 to 2054 (DIDECVEEPEICALGTCSNTEGSFKCLCPDGFSLSSTGRRCQ). A glycan (O-linked (Glc) serine) is linked at Ser-2035. Positions 2059 to 2111 (SYCYAKFEGGKCSSPKSRNHSKQECCCALKGEGWGDPCELCPTEPDEAFRQIC) constitute a TB 8 domain. Asn-2077 carries N-linked (GlcNAc...) asparagine glycosylation. Residues 2127 to 2165 (DMDECKEPDVCKHGQCINTDGSYRCECPFGYILEGNECV) enclose the EGF-like 36; calcium-binding domain. O-linked (Glc) serine glycosylation occurs at Ser-2148. An EGF-like 37; calcium-binding domain is found at 2166-2205 (DTDECSVGNPCGNGTCKNVIGGFECTCEEGFEPGPMMTCE). N-linked (GlcNAc...) asparagine glycosylation occurs at Asn-2178. The 41-residue stretch at 2206–2246 (DINECAQNPLLCAFRCVNTYGSYECKCPTGYVLREDRRMCK) folds into the EGF-like 38; calcium-binding domain. The O-linked (Glc) serine glycan is linked to Ser-2227. Positions 2247–2290 (DEDECEEGKHDCAEKQMECKNLIGMYICICGPGYQRRPDGEGCV) constitute an EGF-like 39; calcium-binding domain. The region spanning 2291–2332 (DENECQTKPGICENGRCLNTRGSYTCECNDGFTASPTQDECL) is the EGF-like 40; calcium-binding domain. Ser-2313 carries an O-linked (Glc) serine glycan. Residues 2337–2390 (GYCFTEVLQNMCQIGSSNRNPVTKSECCCDGGRGWGPHCEICPFQGTVAFKKLC) form the TB 9 domain. Positions 2402 to 2443 (DIDECKVIHDVCRNGECINDRGSYHCICKTGYTPDITGTACV) constitute an EGF-like 41; calcium-binding domain. Intrachain disulfides connect Cys-2406–Cys-2418, Cys-2413–Cys-2427, Cys-2429–Cys-2442, Cys-2448–Cys-2459, Cys-2455–Cys-2468, Cys-2470–Cys-2483, Cys-2489–Cys-2500, Cys-2496–Cys-2509, Cys-2511–Cys-2522, Cys-2528–Cys-2541, Cys-2535–Cys-2550, Cys-2552–Cys-2565, Cys-2571–Cys-2581, Cys-2577–Cys-2590, Cys-2592–Cys-2605, Cys-2611–Cys-2622, Cys-2617–Cys-2631, Cys-2633–Cys-2646, Cys-2652–Cys-2663, Cys-2659–Cys-2672, and Cys-2674–Cys-2686. The region spanning 2444 to 2484 (DLNECNQAPKPCNFICKNTEGSYQCSCPKGYILQEDGRSCK) is the EGF-like 42; calcium-binding domain. Ser-2465 carries O-linked (Glc) serine glycosylation. The EGF-like 43; calcium-binding domain maps to 2485-2523 (DLDECATKQHNCQFLCVNTIGSFACKCPPGFTQHHTACI). The EGF-like 44; calcium-binding domain maps to 2524-2566 (DNNECTSDINLCGAKGICQNTPGSFTCECQRGFSLDQSGASCE). An O-linked (Glc) serine glycan is attached at Ser-2547. The region spanning 2567-2606 (DVDECEGNHRCQHGCQNIIGGYRCSCPQGYLQHYQWNQCV) is the EGF-like 45; calcium-binding domain. Residues 2607-2647 (DENECLSAHICGGASCHNTLGSYKCMCPAGFQYEQFSGGCQ) form the EGF-like 46; calcium-binding domain. A glycan (O-linked (Glc) serine) is linked at Ser-2628. In terms of domain architecture, EGF-like 47; calcium-binding spans 2648–2687 (DINECGSSQAPCSYGCSNTEGGYLCGCPPGYFRIGQGHCV). A phosphoserine mark is found at Ser-2702 and Ser-2709. N-linked (GlcNAc...) asparagine glycosylation is found at Asn-2734, Asn-2750, and Asn-2767.

It belongs to the fibrillin family. As to quaternary structure, interacts with COL16A1. Interacts with integrin alpha-V/beta-3. Interacts with ADAMTS10; this interaction promotes microfibril assembly. Interacts with THSD4; this interaction promotes fibril formation. Interacts (via N-terminal domain) with FBLN2 and FBLN5. Interacts with ELN. Forms a ternary complex with ELN and FBLN2 or FBLN5 and a significant interaction with ELN seen only in the presence of FBLN2 or FBLN5. Interacts (via N-terminal domain) with LTBP2 (via C-terminal domain) in a Ca(+2)-dependent manner. Interacts (via N-terminal domain) with LTBP1 (via C-terminal domain). Interacts with integrins ITGA5:ITGB1, ITGAV:ITGB3 and ITGAV:ITGB6. Interacts (via N-terminal domain) with BMP2, BMP4, BMP7, BMP10 and GDF5. Interacts (via N-terminal domain) with MFAP2 and MFAP5. Interacts with ADAMTSL5. Interacts with MFAP4. Interacts (via N-terminal domain) with TNFSF11 in a Ca(+2)-dependent manner. Interacts (via N-terminal domain) with EFEMP2; this interaction inhibits EFEMP2 binding to LOX and ELN. Post-translationally, cleavage of N- and C-terminus by furin is required for incorporation into the extracellular matrix and assembly into microfibrils. The C-terminus, which corresponds to the Asprosin chain, was initially thought to constitute a propeptide. Fibrillin-1 and Asprosin chains are still linked together during the secretion from cells, but are subsequently separated by furin, an essential step for incorporation of Fibrillin-1 into the nascent microfibrils. Forms intermolecular disulfide bonds either with other fibrillin-1 molecules or with other components of the microfibrils. In terms of processing, O-glycosylated on serine residues by POGLUT2 and POGLUT3 which is necessary for efficient protein secretion.

It is found in the secreted. Its subcellular location is the extracellular space. The protein resides in the extracellular matrix. Structural component of the 10-12 nm diameter microfibrils of the extracellular matrix, which conveys both structural and regulatory properties to load-bearing connective tissues. Fibrillin-1-containing microfibrils provide long-term force bearing structural support. In tissues such as the lung, blood vessels and skin, microfibrils form the periphery of the elastic fiber, acting as a scaffold for the deposition of elastin. In addition, microfibrils can occur as elastin-independent networks in tissues such as the ciliary zonule, tendon, cornea and glomerulus where they provide tensile strength and have anchoring roles. Fibrillin-1 also plays a key role in tissue homeostasis through specific interactions with growth factors, such as the bone morphogenetic proteins (BMPs), growth and differentiation factors (GDFs) and latent transforming growth factor-beta-binding proteins (LTBPs), cell-surface integrins and other extracellular matrix protein and proteoglycan components. Regulates osteoblast maturation by controlling TGF-beta bioavailability and calibrating TGF-beta and BMP levels, respectively. Negatively regulates osteoclastogenesis by binding and sequestering an osteoclast differentiation and activation factor TNFSF11. This leads to disruption of TNFSF11-induced Ca(2+) signaling and impairment of TNFSF11-mediated nuclear translocation and activation of transcription factor NFATC1 which regulates genes important for osteoclast differentiation and function. Mediates cell adhesion via its binding to cell surface receptors integrins ITGAV:ITGB3 and ITGA5:ITGB1. Binds heparin and this interaction plays an important role in the assembly of microfibrils. Functionally, hormone that targets the liver to increase plasma glucose levels. Secreted by white adipose tissue and circulates in the plasma. Acts in response to fasting and promotes blood glucose elevation by binding to the surface of hepatocytes. Promotes hepatocyte glucose release by activating the protein kinase A activity in the liver, resulting in rapid glucose release into the circulation. The protein is Fibrillin-1 of Sus scrofa (Pig).